The primary structure comprises 701 residues: Potassium-transporting ATPase ATP-binding subunit (701 aa).

The segment at 1–28 (MNPDAPTPKNKSSRSRPSDRPQARKKAK) is disordered. Helical transmembrane passes span 57-77 (MFLV…PNLF), 90-110 (GILT…EAVA), 245-265 (VLLA…PVFA), and 276-296 (ILVA…LSAI). Asp-329 functions as the 4-aspartylphosphate intermediate in the catalytic mechanism. ATP contacts are provided by residues Asp-366, Glu-370, 397-404 (FSAKTRMS), and Lys-416. Mg(2+) is bound by residues Asp-539 and Asp-543. Helical transmembrane passes span 599 to 619 (FSLA…FASA), 635 to 655 (AVLS…PLAL), and 681 to 701 (VIAP…VGLA).

It belongs to the cation transport ATPase (P-type) (TC 3.A.3) family. Type IA subfamily. In terms of assembly, the system is composed of three essential subunits: KdpA, KdpB and KdpC.

Its subcellular location is the cell membrane. It carries out the reaction K(+)(out) + ATP + H2O = K(+)(in) + ADP + phosphate + H(+). Part of the high-affinity ATP-driven potassium transport (or Kdp) system, which catalyzes the hydrolysis of ATP coupled with the electrogenic transport of potassium into the cytoplasm. This subunit is responsible for energy coupling to the transport system and for the release of the potassium ions to the cytoplasm. The polypeptide is Potassium-transporting ATPase ATP-binding subunit (Anabaena sp. (strain L31)).